Reading from the N-terminus, the 350-residue chain is Anthranilate phosphoribosyltransferase (350 aa).

5-phospho-alpha-D-ribose 1-diphosphate contacts are provided by residues Gly-81, 84–85 (GD), Thr-89, 91–94 (NIST), 109–117 (KHGGRSVSS), and Ser-121. Gly-81 lines the anthranilate pocket. Ser-93 is a Mg(2+) binding site. Arg-167 lines the anthranilate pocket. Mg(2+)-binding residues include Asp-230 and Glu-231.

This sequence belongs to the anthranilate phosphoribosyltransferase family. As to quaternary structure, homodimer. Requires Mg(2+) as cofactor.

It carries out the reaction N-(5-phospho-beta-D-ribosyl)anthranilate + diphosphate = 5-phospho-alpha-D-ribose 1-diphosphate + anthranilate. The protein operates within amino-acid biosynthesis; L-tryptophan biosynthesis; L-tryptophan from chorismate: step 2/5. Functionally, catalyzes the transfer of the phosphoribosyl group of 5-phosphorylribose-1-pyrophosphate (PRPP) to anthranilate to yield N-(5'-phosphoribosyl)-anthranilate (PRA). The protein is Anthranilate phosphoribosyltransferase of Nitrosospira multiformis (strain ATCC 25196 / NCIMB 11849 / C 71).